The chain runs to 461 residues: Glycine--tRNA ligase (461 aa).

Substrate contacts are provided by Arg100 and Glu163. Residues 195–197, 205–210, 282–283, and 326–329 contribute to the ATP site; these read RNE, FRTREF, EL, and GLGR. Substrate is bound at residue 210–214; the sequence is FEQME. 322–326 is a binding site for substrate; that stretch reads EPAAG.

It belongs to the class-II aminoacyl-tRNA synthetase family. Homodimer.

The protein localises to the cytoplasm. It carries out the reaction tRNA(Gly) + glycine + ATP = glycyl-tRNA(Gly) + AMP + diphosphate. Its function is as follows. Catalyzes the attachment of glycine to tRNA(Gly). The chain is Glycine--tRNA ligase from Corynebacterium efficiens (strain DSM 44549 / YS-314 / AJ 12310 / JCM 11189 / NBRC 100395).